Here is a 563-residue protein sequence, read N- to C-terminus: Kelch repeat and BTB domain-containing protein 1 (563 aa).

The BTB domain maps to 21 to 88 (CDINIVINDE…IYGIPLSLTN (68 aa)). Positions 123–219 (CIDFYIYADK…SLLSPQVIKS (97 aa)) constitute a BACK domain. Kelch repeat units lie at residues 252–297 (IELI…VMDN), 298–346 (IIYM…VDDE), 347–395 (YIYC…MLNG), 397–441 (IYVI…VHAG), 442–492 (KIYI…SVHN), and 494–540 (LYVG…PIKH).

In terms of assembly, interacts (via BTB domain) with host CUL3.

The protein resides in the host cytoplasm. Its function is as follows. Probable substrate-specific adapter of CUL3-containing E3 ubiquitin-protein ligases which mediate the ubiquitination and subsequent proteasomal degradation of host target proteins. The protein is Kelch repeat and BTB domain-containing protein 1 (KBTB1) of Mus musculus (Mouse).